The chain runs to 224 residues: UPF0173 metal-dependent hydrolase Memar_1421 (224 aa).

The protein belongs to the UPF0173 family.

In Methanoculleus marisnigri (strain ATCC 35101 / DSM 1498 / JR1), this protein is UPF0173 metal-dependent hydrolase Memar_1421.